The sequence spans 890 residues: Alanine--tRNA ligase (890 aa).

Zn(2+)-binding residues include H572, H576, C674, and H678.

It belongs to the class-II aminoacyl-tRNA synthetase family. Zn(2+) is required as a cofactor.

The protein resides in the cytoplasm. The enzyme catalyses tRNA(Ala) + L-alanine + ATP = L-alanyl-tRNA(Ala) + AMP + diphosphate. In terms of biological role, catalyzes the attachment of alanine to tRNA(Ala) in a two-step reaction: alanine is first activated by ATP to form Ala-AMP and then transferred to the acceptor end of tRNA(Ala). Also edits incorrectly charged Ser-tRNA(Ala) and Gly-tRNA(Ala) via its editing domain. The polypeptide is Alanine--tRNA ligase (Prochlorococcus marinus (strain MIT 9211)).